We begin with the raw amino-acid sequence, 479 residues long: 3-phytase B (479 aa).

The first 19 residues, 1-19, serve as a signal peptide directing secretion; that stretch reads MPRTSLLTLACALATGASA. Residue H82 is the Nucleophile of the active site. N106, N191, N227, N250, and N315 each carry an N-linked (GlcNAc...) asparagine glycan. The Proton donor role is filled by D338. N-linked (GlcNAc...) asparagine glycans are attached at residues N425, N442, and N458.

This sequence belongs to the histidine acid phosphatase family.

The enzyme catalyses 1D-myo-inositol hexakisphosphate + H2O = 1D-myo-inositol 1,2,4,5,6-pentakisphosphate + phosphate. Catalyzes the hydrolysis of inorganic orthophosphate from phytate. In Aspergillus niger, this protein is 3-phytase B (phyB).